The following is a 313-amino-acid chain: GTP cyclohydrolase MptA (313 aa).

The protein belongs to the GTP cyclohydrolase IV family. As to quaternary structure, homodimer. Fe(2+) serves as cofactor.

It catalyses the reaction GTP + H2O = 7,8-dihydroneopterin 2',3'-cyclic phosphate + formate + diphosphate + H(+). The protein operates within cofactor biosynthesis; 5,6,7,8-tetrahydromethanopterin biosynthesis. Functionally, converts GTP to 7,8-dihydro-D-neopterin 2',3'-cyclic phosphate, the first intermediate in the biosynthesis of coenzyme methanopterin. The sequence is that of GTP cyclohydrolase MptA from Methanosphaera stadtmanae (strain ATCC 43021 / DSM 3091 / JCM 11832 / MCB-3).